A 542-amino-acid polypeptide reads, in one-letter code: Protein DETOXIFICATION 34 (542 aa).

12 helical membrane passes run 97–117 (APIAFNILCNYGVNSFTSIFV), 127–147 (AVAIALSVVSNFSFGFLLGMA), 176–196 (ILLGTSVCLLPLYIYATPLLI), 204–224 (IAEISGKFTTQIIPQMFALAI), 240–260 (IMAWIGFFALTLHIFILYLFI), 272–292 (AAFDVSAWGIAIAQVVYVVGW), 316–336 (FASAVMLCLEIWYFMTIIVLT), 344–364 (IAVGSLSICMNINGWEGMLFI), 390–410 (VIVTVIESLVIGVVCAIVILI), 435–455 (LLGITMILNSLQPVISGVAVG), 462–482 (VAYINLFCYYAFGLPLGFLLG), and 491–511 (GIWIGMICGTSLQTLILLYMI).

It belongs to the multi antimicrobial extrusion (MATE) (TC 2.A.66.1) family.

Its subcellular location is the membrane. The sequence is that of Protein DETOXIFICATION 34 from Arabidopsis thaliana (Mouse-ear cress).